The chain runs to 270 residues: Electron transfer flavoprotein subunit beta (270 aa).

This sequence belongs to the ETF alpha-subunit/FixB family. As to quaternary structure, heterodimer of an alpha and a beta subunit. The cofactor is FAD.

In terms of biological role, the electron transfer flavoprotein serves as a specific electron acceptor for other dehydrogenases. It transfers the electrons to the main respiratory chain via ETF-ubiquinone oxidoreductase (ETF dehydrogenase). This Megasphaera elsdenii protein is Electron transfer flavoprotein subunit beta (etfB).